Reading from the N-terminus, the 246-residue chain is MGYRIEMATRNPFDIDHKSKYLREAALEANLSHPETTPTMLTCPIDSGFLKDPVITPEGFVYNKSSILKWLETKKEDPQSRKPLTAKDLQPFPELLIIVNRFVETQTNYEKLKNRLVQNARVAARQKEYTEIPDIFLCPISKTLIKTPVITAQGKVYDQEALSNFLIATGNKDETGKKLSIDDVVVFDELYQQIKVYNFYRKREMQKNQIQPSVSSGFGFFSLNFLTSWLWGTEEKKEKTSSDMTY.

U-box domains follow at residues T36–Y109 and E131–E204.

As to quaternary structure, interacts with host CLK1. In terms of processing, ubiquitinated in the presence of host E1 ubiquitin-activating enzyme, E2 ubiquitin-conjugating enzyme (UBE2D1 or UBE2D3) and ubiquitin.

It localises to the secreted. Its subcellular location is the host cell. It catalyses the reaction S-ubiquitinyl-[E2 ubiquitin-conjugating enzyme]-L-cysteine + [acceptor protein]-L-lysine = [E2 ubiquitin-conjugating enzyme]-L-cysteine + N(6)-ubiquitinyl-[acceptor protein]-L-lysine.. Functionally, effector proteins function to alter host cell physiology and promote bacterial survival in host tissues. This protein is an E3 ubiquitin ligase that interferes with host's ubiquitination pathway. Acts in conjunction with host E2 ubiquitin-conjugating enzymes UBE2D1 (UBCH5A) or UBE2D3 (UBCH5C), and mediates polyubiquitination of host kinase CLK1. This is E3 ubiquitin-protein ligase LubX (lubX) from Legionella pneumophila subsp. pneumophila (strain Philadelphia 1 / ATCC 33152 / DSM 7513).